Consider the following 97-residue polypeptide: Cystatin-A (97 aa).

At M1 the chain carries N-acetylmethionine. Positions 46–50 (QVVAG) match the Secondary area of contact motif.

Belongs to the cystatin family.

Its subcellular location is the cytoplasm. Its function is as follows. This is an intracellular thiol proteinase inhibitor. In Mus musculus (Mouse), this protein is Cystatin-A (Csta).